A 285-amino-acid polypeptide reads, in one-letter code: Acetylglutamate kinase (285 aa).

Residues 64-65 (GG), arginine 86, and asparagine 181 each bind substrate.

The protein belongs to the acetylglutamate kinase family. ArgB subfamily.

The protein resides in the cytoplasm. The enzyme catalyses N-acetyl-L-glutamate + ATP = N-acetyl-L-glutamyl 5-phosphate + ADP. It participates in amino-acid biosynthesis; L-arginine biosynthesis; N(2)-acetyl-L-ornithine from L-glutamate: step 2/4. In terms of biological role, catalyzes the ATP-dependent phosphorylation of N-acetyl-L-glutamate. In Clostridium beijerinckii (strain ATCC 51743 / NCIMB 8052) (Clostridium acetobutylicum), this protein is Acetylglutamate kinase.